Consider the following 602-residue polypeptide: Aspartate--tRNA(Asp/Asn) ligase (602 aa).

Glutamate 170 provides a ligand contact to L-aspartate. The segment at 194–197 (QLFK) is aspartate. Arginine 216 serves as a coordination point for L-aspartate. ATP-binding positions include 216-218 (RDE) and glutamine 225. Histidine 448 is a binding site for L-aspartate. Glutamate 482 lines the ATP pocket. L-aspartate is bound at residue arginine 489. 534-537 (GWDR) lines the ATP pocket. The tract at residues 559 to 602 (GGVDPLTSAPAPITAQQRKESGVDAKPEPKGDAAAAKPQVSAEK) is disordered. A compositionally biased stretch (basic and acidic residues) spans 575 to 589 (QRKESGVDAKPEPKG).

It belongs to the class-II aminoacyl-tRNA synthetase family. Type 1 subfamily. In terms of assembly, homodimer.

Its subcellular location is the cytoplasm. It carries out the reaction tRNA(Asx) + L-aspartate + ATP = L-aspartyl-tRNA(Asx) + AMP + diphosphate. Its function is as follows. Aspartyl-tRNA synthetase with relaxed tRNA specificity since it is able to aspartylate not only its cognate tRNA(Asp) but also tRNA(Asn). Reaction proceeds in two steps: L-aspartate is first activated by ATP to form Asp-AMP and then transferred to the acceptor end of tRNA(Asp/Asn). This Rhodococcus opacus (strain B4) protein is Aspartate--tRNA(Asp/Asn) ligase.